Here is a 445-residue protein sequence, read N- to C-terminus: Glutamate--tRNA ligase 1 (445 aa).

The short motif at 10–20 is the 'HIGH' region element; that stretch reads PSPTGMLHVGN. The short motif at 240-244 is the 'KMSKS' region element; sequence KISKR. Residue lysine 243 coordinates ATP.

Belongs to the class-I aminoacyl-tRNA synthetase family. Glutamate--tRNA ligase type 1 subfamily. In terms of assembly, monomer.

Its subcellular location is the cytoplasm. It catalyses the reaction tRNA(Glu) + L-glutamate + ATP = L-glutamyl-tRNA(Glu) + AMP + diphosphate. Catalyzes the attachment of glutamate to tRNA(Glu) in a two-step reaction: glutamate is first activated by ATP to form Glu-AMP and then transferred to the acceptor end of tRNA(Glu). This chain is Glutamate--tRNA ligase 1, found in Rickettsia bellii (strain OSU 85-389).